Here is a 211-residue protein sequence, read N- to C-terminus: Large ribosomal subunit protein uL4 (211 aa).

The interval 41-87 (QAHARQGTASTLTRSEVRGGGRKPYKQKGTGRARQGSIRTPLRPGGG) is disordered. The span at 60 to 71 (GGRKPYKQKGTG) shows a compositional bias: basic residues.

This sequence belongs to the universal ribosomal protein uL4 family. In terms of assembly, part of the 50S ribosomal subunit.

Functionally, one of the primary rRNA binding proteins, this protein initially binds near the 5'-end of the 23S rRNA. It is important during the early stages of 50S assembly. It makes multiple contacts with different domains of the 23S rRNA in the assembled 50S subunit and ribosome. Its function is as follows. Forms part of the polypeptide exit tunnel. The polypeptide is Large ribosomal subunit protein uL4 (Parasynechococcus marenigrum (strain WH8102)).